We begin with the raw amino-acid sequence, 89 residues long: Small ribosomal subunit protein uS15 (89 aa).

It belongs to the universal ribosomal protein uS15 family. Part of the 30S ribosomal subunit. Forms a bridge to the 50S subunit in the 70S ribosome, contacting the 23S rRNA.

Its function is as follows. One of the primary rRNA binding proteins, it binds directly to 16S rRNA where it helps nucleate assembly of the platform of the 30S subunit by binding and bridging several RNA helices of the 16S rRNA. Functionally, forms an intersubunit bridge (bridge B4) with the 23S rRNA of the 50S subunit in the ribosome. The sequence is that of Small ribosomal subunit protein uS15 from Streptococcus equi subsp. zooepidemicus (strain H70).